The following is a 490-amino-acid chain: 4-hydroxyphenylacetaldehyde synthase (490 aa).

L-phenylalanine is bound by residues P97, H198, and H313. At K314 the chain carries N6-(pyridoxal phosphate)lysine. F343 contributes to the L-phenylalanine binding site.

Belongs to the group II decarboxylase family. As to quaternary structure, homodimer. Pyridoxal 5'-phosphate serves as cofactor.

It catalyses the reaction L-tyrosine + O2 + H2O + H(+) = (4-hydroxyphenyl)acetaldehyde + H2O2 + NH4(+) + CO2. Its function is as follows. Catalyzes the production of 4-hydroxyphenylacetaldehyde (HPAA) directly from L-tyrosine, tyramine not being formed as an intermediate. The polypeptide is 4-hydroxyphenylacetaldehyde synthase (Rhodiola rosea (Roseroot)).